The chain runs to 247 residues: 14-3-3 protein zeta (247 aa).

This sequence belongs to the 14-3-3 family. In terms of assembly, homodimer.

The protein localises to the cytoplasm. Functionally, adapter protein implicated in the regulation of a large spectrum of both general and specialized signaling pathways. Binds to a large number of partners, usually by recognition of a phosphoserine or phosphothreonine motif. Binding generally results in the modulation of the activity of the binding partner. This Bombyx mori (Silk moth) protein is 14-3-3 protein zeta (14-3-3zeta).